The chain runs to 192 residues: MSIQNEMPGYNEMNRFLNQQGAGLTPAEMHGLISGMICGGNNDSSWQPLLHDLTNEGLAFGHELAQALRKMHAATSDALEDDGFLFQLYLPEGDDVSVFDRADALAGWVNHFLLGLGVTQPKLDKVTGETGEAIDDLRNIAQLGYDESEDQEELEMSLEEIIEYVRVAALLCHDTFTRQQPTAPEVRKPTLH.

It belongs to the UPF0149 family.

The protein is UPF0149 protein YgfB of Salmonella agona (strain SL483).